The following is a 511-amino-acid chain: Alpha-amylase 1 (511 aa).

An N-terminal signal peptide occupies residues 1 to 15; the sequence is MKFFLLLSLIGFCWA. Pyrrolidone carboxylic acid is present on glutamine 16. 3 disulfide bridges follow: cysteine 43/cysteine 101, cysteine 85/cysteine 130, and cysteine 156/cysteine 175. Positions 115, 173, and 182 each coordinate Ca(2+). Arginine 210 contacts chloride. Aspartate 212 acts as the Nucleophile in catalysis. Residue histidine 216 coordinates Ca(2+). The active-site Proton donor is the glutamate 248. Residues asparagine 313 and arginine 352 each contribute to the chloride site. 2 cysteine pairs are disulfide-bonded: cysteine 393-cysteine 399 and cysteine 465-cysteine 477.

It belongs to the glycosyl hydrolase 13 family. In terms of assembly, monomer. Ca(2+) is required as a cofactor. Requires chloride as cofactor. In terms of tissue distribution, expressed in liver and saliva.

The protein resides in the secreted. The enzyme catalyses Endohydrolysis of (1-&gt;4)-alpha-D-glucosidic linkages in polysaccharides containing three or more (1-&gt;4)-alpha-linked D-glucose units.. This is Alpha-amylase 1 (Amy1) from Mus musculus (Mouse).